The chain runs to 349 residues: Nicotinate-nucleotide--dimethylbenzimidazole phosphoribosyltransferase (349 aa).

Glutamate 315 functions as the Proton acceptor in the catalytic mechanism.

It belongs to the CobT family.

It catalyses the reaction 5,6-dimethylbenzimidazole + nicotinate beta-D-ribonucleotide = alpha-ribazole 5'-phosphate + nicotinate + H(+). Its pathway is nucleoside biosynthesis; alpha-ribazole biosynthesis; alpha-ribazole from 5,6-dimethylbenzimidazole: step 1/2. Functionally, catalyzes the synthesis of alpha-ribazole-5'-phosphate from nicotinate mononucleotide (NAMN) and 5,6-dimethylbenzimidazole (DMB). The sequence is that of Nicotinate-nucleotide--dimethylbenzimidazole phosphoribosyltransferase from Variovorax paradoxus (strain S110).